We begin with the raw amino-acid sequence, 542 residues long: Delta 8-(E)-sphingolipid desaturase (542 aa).

The Cytochrome b5 heme-binding domain occupies 1 to 75 (MVVSREEVRE…FKRWSIGRVK (75 aa)). Heme-binding residues include H35 and H58. 2 helical membrane-spanning segments follow: residues 215–235 (WYTL…FIAH) and 248–268 (IDNI…LGWW). The Histidine box-1 motif lies at 235 to 239 (HDAGH). Positions 272–276 (HNVHH) match the Histidine box-2 motif. 3 helical membrane-spanning segments follow: residues 329–346 (LYYP…RLSW), 360–380 (AAWF…WFFY), and 393–413 (FWFL…IVLS). The Histidine box-3 motif lies at 455 to 459 (QAIHH).

It belongs to the fatty acid desaturase type 1 family.

The protein resides in the membrane. The catalysed reaction is an N-acylsphing-4-enine + 2 Fe(II)-[cytochrome b5] + O2 + 2 H(+) = a (4E,8E)-4-sphinga-4,8-dienine ceramide + 2 Fe(III)-[cytochrome b5] + 2 H2O. It participates in lipid metabolism; sphingolipid metabolism. Functionally, delta(8)-fatty-acid desaturase which introduces a double bond at the 8-position in the long-chain base (LCB) of ceramides. Required for the formation of the di-unsaturated sphingoid base (E,E)-sphinga-4,8-dienine during glucosylceramide (GluCer) biosynthesis. The chain is Delta 8-(E)-sphingolipid desaturase from Komagataella phaffii (strain GS115 / ATCC 20864) (Yeast).